A 147-amino-acid polypeptide reads, in one-letter code: Hemoglobin subunit epsilon (147 aa).

The Globin domain occupies 3–147 (HFTAEEKAAV…VAIALAHKYH (145 aa)). Phosphoserine is present on residues serine 14 and serine 51. Heme b-binding residues include histidine 64 and histidine 93.

Belongs to the globin family. In terms of assembly, heterotetramer of two alpha chains and two epsilon chains in early embryonic hemoglobin Gower-2; two zeta chains and two epsilon chains in early embryonic hemoglobin Gower-1. Red blood cells.

Its function is as follows. The epsilon chain is a beta-type chain of early mammalian embryonic hemoglobin. This is Hemoglobin subunit epsilon (HBE1) from Pan paniscus (Pygmy chimpanzee).